We begin with the raw amino-acid sequence, 468 residues long: Hydroxymethylglutaryl-CoA lyase, mitochondrial (468 aa).

One can recognise a Pyruvate carboxyltransferase domain in the interval 168–435; it reads VKIVEVGPRD…HTNVDLGKLI (268 aa). Residue Arg176 participates in substrate binding. Residues Asp177, His368, and His370 each coordinate a divalent metal cation. Cys401 is an active-site residue. Asn410 contributes to the a divalent metal cation binding site.

It belongs to the HMG-CoA lyase family. As to quaternary structure, homodimer. A divalent metal cation serves as cofactor.

It is found in the mitochondrion matrix. The catalysed reaction is (3S)-3-hydroxy-3-methylglutaryl-CoA = acetoacetate + acetyl-CoA. It functions in the pathway metabolic intermediate metabolism; (S)-3-hydroxy-3-methylglutaryl-CoA degradation; acetoacetate from (S)-3-hydroxy-3-methylglutaryl-CoA: step 1/1. Functionally, involved in the catabolism of branched amino acids such as leucine. This chain is Hydroxymethylglutaryl-CoA lyase, mitochondrial (HMGCL), found in Arabidopsis thaliana (Mouse-ear cress).